We begin with the raw amino-acid sequence, 274 residues long: tRNA-cytidine(32) 2-sulfurtransferase (274 aa).

A PP-loop motif motif is present at residues 40–45 (SGGKDS). 3 residues coordinate [4Fe-4S] cluster: C115, C118, and C206.

The protein belongs to the TtcA family. Homodimer. Mg(2+) is required as a cofactor. [4Fe-4S] cluster serves as cofactor.

It localises to the cytoplasm. The enzyme catalyses cytidine(32) in tRNA + S-sulfanyl-L-cysteinyl-[cysteine desulfurase] + AH2 + ATP = 2-thiocytidine(32) in tRNA + L-cysteinyl-[cysteine desulfurase] + A + AMP + diphosphate + H(+). Its pathway is tRNA modification. Catalyzes the ATP-dependent 2-thiolation of cytidine in position 32 of tRNA, to form 2-thiocytidine (s(2)C32). The sulfur atoms are provided by the cysteine/cysteine desulfurase (IscS) system. The sequence is that of tRNA-cytidine(32) 2-sulfurtransferase from Pseudomonas putida (strain GB-1).